The sequence spans 350 residues: Lipoyl synthase, mitochondrial (350 aa).

Positions 83, 88, 94, 113, 117, 120, and 328 each coordinate [4Fe-4S] cluster. In terms of domain architecture, Radical SAM core spans 96–317; sequence GGESGTATAT…EKVGNELGFA (222 aa).

Belongs to the radical SAM superfamily. Lipoyl synthase family. [4Fe-4S] cluster serves as cofactor.

The protein localises to the mitochondrion. The enzyme catalyses [[Fe-S] cluster scaffold protein carrying a second [4Fe-4S](2+) cluster] + N(6)-octanoyl-L-lysyl-[protein] + 2 oxidized [2Fe-2S]-[ferredoxin] + 2 S-adenosyl-L-methionine + 4 H(+) = [[Fe-S] cluster scaffold protein] + N(6)-[(R)-dihydrolipoyl]-L-lysyl-[protein] + 4 Fe(3+) + 2 hydrogen sulfide + 2 5'-deoxyadenosine + 2 L-methionine + 2 reduced [2Fe-2S]-[ferredoxin]. It participates in protein modification; protein lipoylation via endogenous pathway; protein N(6)-(lipoyl)lysine from octanoyl-[acyl-carrier-protein]: step 2/2. Catalyzes the radical-mediated insertion of two sulfur atoms into the C-6 and C-8 positions of the octanoyl moiety bound to the lipoyl domains of lipoate-dependent enzymes, thereby converting the octanoylated domains into lipoylated derivatives. In Trichoplax adhaerens (Trichoplax reptans), this protein is Lipoyl synthase, mitochondrial.